The sequence spans 121 residues: Immunoglobulin kappa variable 4-1 (121 aa).

An N-terminal signal peptide occupies residues 1–20; sequence MVLQTQVFISLLLWISGAYG. Residues 21 to 43 are framework-1; it reads DIVMTQSPDSLAVSLGERATINC. Positions 21 to 121 constitute an Ig-like domain; that stretch reads DIVMTQSPDS…YYCQQYYSTP (101 aa). Residues Cys-43 and Cys-114 are joined by a disulfide bond. Positions 44-60 are complementarity-determining-1; it reads KSSQSVLYSSNNKNYLA. The interval 61–75 is framework-2; that stretch reads WYQQKPGQPPKLLIY. Residues 76 to 82 form a complementarity-determining-2 region; it reads WASTRES. The segment at 83–114 is framework-3; that stretch reads GVPDRFSGSGSGTDFTLTISSLQAEDVAVYYC. The complementarity-determining-3 stretch occupies residues 115–121; it reads QQYYSTP.

In terms of assembly, immunoglobulins are composed of two identical heavy chains and two identical light chains; disulfide-linked.

The protein resides in the secreted. Its subcellular location is the cell membrane. Functionally, v segment of the variable domain of immunoglobulins light chain that participates in the antigen recognition. Immunoglobulins, also known as antibodies, are membrane-bound or secreted glycoproteins produced by B lymphocytes. In the recognition phase of humoral immunity, the membrane-bound immunoglobulins serve as receptors which, upon binding of a specific antigen, trigger the clonal expansion and differentiation of B lymphocytes into immunoglobulins-secreting plasma cells. Secreted immunoglobulins mediate the effector phase of humoral immunity, which results in the elimination of bound antigens. The antigen binding site is formed by the variable domain of one heavy chain, together with that of its associated light chain. Thus, each immunoglobulin has two antigen binding sites with remarkable affinity for a particular antigen. The variable domains are assembled by a process called V-(D)-J rearrangement and can then be subjected to somatic hypermutations which, after exposure to antigen and selection, allow affinity maturation for a particular antigen. The protein is Immunoglobulin kappa variable 4-1 of Homo sapiens (Human).